The sequence spans 358 residues: Sulfate/thiosulfate import ATP-binding protein CysA (358 aa).

In terms of domain architecture, ABC transporter spans 3 to 237 (IKIENLEKHF…PQTPFVTQFV (235 aa)). An ATP-binding site is contributed by 35–42 (GPSGCGKT).

Belongs to the ABC transporter superfamily. Sulfate/tungstate importer (TC 3.A.1.6) family. The complex is composed of two ATP-binding proteins (CysA), two transmembrane proteins (CysT and CysW) and a solute-binding protein (CysP).

It is found in the cell inner membrane. It carries out the reaction sulfate(out) + ATP + H2O = sulfate(in) + ADP + phosphate + H(+). The enzyme catalyses thiosulfate(out) + ATP + H2O = thiosulfate(in) + ADP + phosphate + H(+). Its function is as follows. Part of the ABC transporter complex CysAWTP involved in sulfate/thiosulfate import. Responsible for energy coupling to the transport system. The sequence is that of Sulfate/thiosulfate import ATP-binding protein CysA from Mannheimia succiniciproducens (strain KCTC 0769BP / MBEL55E).